The primary structure comprises 137 residues: Large-conductance mechanosensitive channel (137 aa).

At Met-1–Val-16 the chain is on the cytoplasmic side. A helical membrane pass occupies residues Val-17–Leu-45. Over Gly-46–Asn-74 the chain is Periplasmic. A helical membrane pass occupies residues Tyr-75–Ile-94. Topologically, residues Ala-95–Gln-137 are cytoplasmic.

The protein belongs to the MscL family. Homopentamer.

Its subcellular location is the cell inner membrane. Functionally, channel that opens in response to stretch forces in the membrane lipid bilayer. Forms a nonselective ion channel with a conductance of about 4 nanosiemens. May participate in the regulation of osmotic pressure changes within the cell. This is Large-conductance mechanosensitive channel from Pectobacterium carotovorum (Erwinia carotovora).